An 827-amino-acid polypeptide reads, in one-letter code: Spastin (827 aa).

Residues 1–13 show a composition bias toward polar residues; sequence MVRNKYTLTTAGK. The segment at 1 to 58 is disordered; sequence MVRNKYTLTTAGKSPSKKSRTGSLSKQHDATGDDDGETGTLDGSGSAAGSPVGGGTDA. Over 1–79 the chain is Cytoplasmic; sequence MVRNKYTLTT…KQNLYIISFP (79 aa). Positions 38–50 are enriched in low complexity; that stretch reads TGTLDGSGSAAGS. The segment at residues 80 to 100 is an intramembrane region (helical); the sequence is VIFVFNVLRSLLYQLFIVFRY. The Cytoplasmic segment spans residues 101 to 827; the sequence is VYNFTTKVVY…WLQDFGDVTL (727 aa). Disordered stretches follow at residues 127 to 190 and 207 to 229; these read QHGH…AHPL and SIQR…KQKH. The span at 129–141 shows a compositional bias: basic residues; the sequence is GHHHHHHHRHSSH. The span at 142–190 shows a compositional bias: low complexity; the sequence is SIHSTAAAHQLQQHQQQQQHQYSLLQQEQHGVTEPQQQQQQQHQAAHPL. The region spanning 231–306 is the MIT domain; sequence HRRAFEYISK…SMARDRLQFL (76 aa). Disordered regions lie at residues 358–381, 398–433, and 476–526; these read HHPA…ATPS, VGYK…GGAG, and VSIP…PQIS. A compositionally biased stretch (low complexity) spans 364–381; the sequence is TAASSRPTTAATAPATPS. Composition is skewed to low complexity over residues 476-486 and 510-524; these read VSIPIPGSSPV and QQPQ…QQPQ. Residue 592-599 participates in ATP binding; that stretch reads GPPGNGKT.

The protein belongs to the AAA ATPase family. Spastin subfamily. As to quaternary structure, homohexamer. The homohexamer is stabilized by ATP-binding. The homohexamer may adopt a ring conformation through which microtubules pass prior to being severed. Interacts with microtubules.

The protein resides in the membrane. Its subcellular location is the cytoplasm. It localises to the cytoskeleton. It is found in the microtubule organizing center. The protein localises to the centrosome. The enzyme catalyses n ATP + n H2O + a microtubule = n ADP + n phosphate + (n+1) alpha/beta tubulin heterodimers.. In terms of biological role, ATP-dependent microtubule severing protein. Microtubule severing may promote reorganization of cellular microtubule arrays and the release of microtubules from the microtubule organizing center following nucleation. The sequence is that of Spastin (spas) from Anopheles gambiae (African malaria mosquito).